Consider the following 430-residue polypeptide: Tol-Pal system protein TolB (430 aa).

The signal sequence occupies residues 1–21 (MKQALRVAFGFLILWASVLHA).

The protein belongs to the TolB family. In terms of assembly, the Tol-Pal system is composed of five core proteins: the inner membrane proteins TolA, TolQ and TolR, the periplasmic protein TolB and the outer membrane protein Pal. They form a network linking the inner and outer membranes and the peptidoglycan layer.

It localises to the periplasm. In terms of biological role, part of the Tol-Pal system, which plays a role in outer membrane invagination during cell division and is important for maintaining outer membrane integrity. TolB occupies a key intermediary position in the Tol-Pal system because it communicates directly with both membrane-embedded components, Pal in the outer membrane and TolA in the inner membrane. The protein is Tol-Pal system protein TolB of Shigella boydii serotype 4 (strain Sb227).